A 206-amino-acid polypeptide reads, in one-letter code: Large ribosomal subunit protein uL22m (206 aa).

The N-terminal 40 residues, 1–40 (MAAALLRELGALRVPNLRIWATQTLRVLPPSCIHTSASLD), are a transit peptide targeting the mitochondrion.

Belongs to the universal ribosomal protein uL22 family. In terms of assembly, component of the mitochondrial ribosome large subunit (39S) which comprises a 16S rRNA and about 50 distinct proteins.

It is found in the mitochondrion. The sequence is that of Large ribosomal subunit protein uL22m (Mrpl22) from Mus musculus (Mouse).